A 112-amino-acid polypeptide reads, in one-letter code: Large ribosomal subunit protein bL20c (112 aa).

Belongs to the bacterial ribosomal protein bL20 family.

It localises to the plastid. It is found in the chloroplast. Binds directly to 23S ribosomal RNA and is necessary for the in vitro assembly process of the 50S ribosomal subunit. It is not involved in the protein synthesizing functions of that subunit. In Chlamydomonas reinhardtii (Chlamydomonas smithii), this protein is Large ribosomal subunit protein bL20c (rpl20).